The sequence spans 293 residues: Neugrin (293 aa).

A signal peptide spans 1–18; it reads MALSLSLFLGGRVRTSLA. A Phosphoserine modification is found at Ser-41. 2 disordered regions span residues 177–210 and 224–254; these read DEVSSKSQNHSTALKVAKSHPHSTDAQKKREGRD and TTALGHQRELQKSATSDSEATGRAGSDTLPS. A glycan (N-linked (GlcNAc...) asparagine) is linked at Asn-185. Residues 198–210 show a composition bias toward basic and acidic residues; sequence HSTDAQKKREGRD.

It belongs to the neugrin family. In terms of assembly, forms a regulatory protein-RNA complex, consisting of RCC1L, NGRN, RPUSD3, RPUSD4, TRUB2, FASTKD2 and 16S mt-rRNA. Interacts with 16S mt-rRNA; this interaction is direct. Expressed in heart, brain, liver and kidney. In brain, mainly expressed in neurons rather than glial cells.

It localises to the nucleus. It is found in the secreted. The protein localises to the mitochondrion membrane. Functionally, plays an essential role in mitochondrial ribosome biogenesis. As a component of a functional protein-RNA module, consisting of RCC1L, NGRN, RPUSD3, RPUSD4, TRUB2, FASTKD2 and 16S mitochondrial ribosomal RNA (16S mt-rRNA), controls 16S mt-rRNA abundance and is required for intra-mitochondrial translation of core subunits of the oxidative phosphorylation system. The polypeptide is Neugrin (Ngrn) (Mus musculus (Mouse)).